We begin with the raw amino-acid sequence, 278 residues long: Indole-3-glycerol phosphate synthase (278 aa).

This sequence belongs to the TrpC family.

The enzyme catalyses 1-(2-carboxyphenylamino)-1-deoxy-D-ribulose 5-phosphate + H(+) = (1S,2R)-1-C-(indol-3-yl)glycerol 3-phosphate + CO2 + H2O. Its pathway is amino-acid biosynthesis; L-tryptophan biosynthesis; L-tryptophan from chorismate: step 4/5. The chain is Indole-3-glycerol phosphate synthase from Pseudomonas aeruginosa (strain LESB58).